The following is a 182-amino-acid chain: Hypoxanthine/guanine phosphoribosyltransferase (182 aa).

The protein belongs to the purine/pyrimidine phosphoribosyltransferase family. Archaeal HPRT subfamily. In terms of assembly, homodimer.

The protein resides in the cytoplasm. The enzyme catalyses IMP + diphosphate = hypoxanthine + 5-phospho-alpha-D-ribose 1-diphosphate. It catalyses the reaction GMP + diphosphate = guanine + 5-phospho-alpha-D-ribose 1-diphosphate. The protein operates within purine metabolism; IMP biosynthesis via salvage pathway; IMP from hypoxanthine: step 1/1. In terms of biological role, catalyzes a salvage reaction resulting in the formation of IMP that is energically less costly than de novo synthesis. This chain is Hypoxanthine/guanine phosphoribosyltransferase, found in Methanospirillum hungatei JF-1 (strain ATCC 27890 / DSM 864 / NBRC 100397 / JF-1).